A 38-amino-acid chain; its full sequence is Tyrosinase inhibitor (38 aa).

3 disulfides stabilise this stretch: Cys11–Cys25, Cys18–Cys29, and Cys24–Cys36. 3',4'-dihydroxyphenylalanine is present on Tyr32.

In terms of assembly, monomer. Contains L-DOPA (3',4'-dihydroxyphenylalanine).

It is found in the secreted. In terms of biological role, potent reversible, competitive inhibitor of tyrosinase (phenol oxidase) in the nanomolar range. The chain is Tyrosinase inhibitor from Musca domestica (House fly).